Here is a 372-residue protein sequence, read N- to C-terminus: uncharacterized protein (372 aa).

Residues 1 to 24 (MSYYQIIVCILASISYIILLEVIA) form the signal peptide. Positions 92–215 (PNRNDTDASY…SSYNLLWSDL (124 aa)) constitute a PA domain. The chain crosses the membrane as a helical span at residues 236 to 256 (FWPFLLCFSPSIIMLITVQAL). Position 280 is a phosphoserine (Ser280). The RING-type; atypical zinc finger occupies 321 to 363 (CVICLESFTKGDKVVALPCKHEFHRPCIAKWIVDYRHACPTCN).

It is found in the golgi apparatus membrane. The protein resides in the vacuole membrane. This is an uncharacterized protein from Schizosaccharomyces pombe (strain 972 / ATCC 24843) (Fission yeast).